We begin with the raw amino-acid sequence, 392 residues long: Alpha-(1,3)-fucosyltransferase fut-6 (392 aa).

Topologically, residues 1–12 are cytoplasmic; that stretch reads MSQIGGATCTWR. The chain crosses the membrane as a helical; Signal-anchor for type II membrane protein span at residues 13–35; it reads YLGRFVTLGIYASVALFVWYTLV. Residues 36 to 392 are Lumenal-facing; that stretch reads PTRSKHKDSI…CNNQIASKYL (357 aa). The N-linked (GlcNAc...) asparagine glycan is linked to Asn158.

Belongs to the glycosyltransferase 10 family. The cofactor is Unlike other alpha-(1,3)-fucosyltransferases, appears not to require a divalent metal cation as cofactor..

It localises to the golgi apparatus. The protein resides in the golgi stack membrane. It participates in protein modification; protein glycosylation. Inhibited by divalent metal cations. Its function is as follows. Involved in the fucosylation of N-glycans. Preferentially catalyzes the addition of fucose in alpha 1-3 linkage to the distal GlcNAc residue in N-glycans. Catalyzes the transfer of fucose to Gal-beta-1-4-GlcNAc-alpha-pNP (LN-pNP) and Gal-beta-1-4-GlcNAc-beta-1-3-Gal-beta-1-4-Glc (LNnT). Unlike alpha-(1,3)-fucosyltransferase fut-1, does not transfer fucose to Man-alpha-1-3-(Man-alpha-1-6)-Man-beta-1-4-GlcNAc-beta-1-4-GlcNAc-beta-1-Asn (M3), Man-alpha-1-3-(Man-alpha-1-6)-Man-beta-1-4-GlcNAc-beta-1-4-(Fuc-alpha-1-6)-GlcNAc-beta-1-Asn (M3F6) and GlcNAc-beta-1-2-Man-alpha-1-3-(GlcNAc-beta-1-2-Man-alpha-1-6)-Man-beta-1-4-GlcNAc-beta-1-4(Fuc-alpha-1-6)-GlcNAc-beta-1-Asn (GnM3F6). This Caenorhabditis elegans protein is Alpha-(1,3)-fucosyltransferase fut-6.